The chain runs to 283 residues: Phosphatidylglycerol--prolipoprotein diacylglyceryl transferase (283 aa).

The next 4 membrane-spanning stretches (helical) occupy residues 19–39 (IGPI…LIGV), 59–79 (LSIW…VLFQ), 90–110 (IIAI…GTLA), and 120–140 (VPFW…QAIG). A 1,2-diacyl-sn-glycero-3-phospho-(1'-sn-glycerol) is bound at residue Arg-141. 3 helical membrane-spanning segments follow: residues 181 to 201 (TFLY…TLFF), 212 to 232 (VGTL…WIEG), and 245 to 265 (IAQV…AWLY).

Belongs to the Lgt family.

Its subcellular location is the cell inner membrane. It catalyses the reaction L-cysteinyl-[prolipoprotein] + a 1,2-diacyl-sn-glycero-3-phospho-(1'-sn-glycerol) = an S-1,2-diacyl-sn-glyceryl-L-cysteinyl-[prolipoprotein] + sn-glycerol 1-phosphate + H(+). It participates in protein modification; lipoprotein biosynthesis (diacylglyceryl transfer). Its function is as follows. Catalyzes the transfer of the diacylglyceryl group from phosphatidylglycerol to the sulfhydryl group of the N-terminal cysteine of a prolipoprotein, the first step in the formation of mature lipoproteins. In Nostoc sp. (strain PCC 7120 / SAG 25.82 / UTEX 2576), this protein is Phosphatidylglycerol--prolipoprotein diacylglyceryl transferase.